A 185-amino-acid polypeptide reads, in one-letter code: Ribosome-recycling factor (185 aa).

The protein belongs to the RRF family.

Its subcellular location is the cytoplasm. Functionally, responsible for the release of ribosomes from messenger RNA at the termination of protein biosynthesis. May increase the efficiency of translation by recycling ribosomes from one round of translation to another. This Yersinia enterocolitica serotype O:8 / biotype 1B (strain NCTC 13174 / 8081) protein is Ribosome-recycling factor.